Here is a 124-residue protein sequence, read N- to C-terminus: UPF0231 protein Shewmr7_3366 (124 aa).

Belongs to the UPF0231 family.

The sequence is that of UPF0231 protein Shewmr7_3366 from Shewanella sp. (strain MR-7).